Reading from the N-terminus, the 370-residue chain is MSNPRPNPGIEAIHPYIGGESKLPGVEQVIKLSSNEGAFGPPPAAQQAYLKAVSSLHRYPDGGSHALREAIGRYFGLDPARIVCGVGSDEMIAHLCMAYSNPDSELIMSVHGFSVYEMYGHYAGAKVVKVPEQALTTDVDALLDAITPRTKVVCIANPNNPTGTMLPTAEIARLRASLPSDVLLVLDAAYAEYVDDPDYDPGVKLVDAGDNTVMTRTFSKIFGLGGLRLGWAYAPPAIVDVLNRVRGPFTVNAAVQEAAIGALEEPGWVERSRAHNSAARAKLATALFDIGIPTLPSVTNFLLADFGSEARAGAADRWLRTRGLIVRRVASYGLPAYLRITIGTNEECDLVAEALRAFMAQAPADSDAAS.

Lys-220 is modified (N6-(pyridoxal phosphate)lysine).

This sequence belongs to the class-II pyridoxal-phosphate-dependent aminotransferase family. Histidinol-phosphate aminotransferase subfamily. In terms of assembly, homodimer. Requires pyridoxal 5'-phosphate as cofactor.

It catalyses the reaction L-histidinol phosphate + 2-oxoglutarate = 3-(imidazol-4-yl)-2-oxopropyl phosphate + L-glutamate. It functions in the pathway amino-acid biosynthesis; L-histidine biosynthesis; L-histidine from 5-phospho-alpha-D-ribose 1-diphosphate: step 7/9. In Granulibacter bethesdensis (strain ATCC BAA-1260 / CGDNIH1), this protein is Histidinol-phosphate aminotransferase.